The sequence spans 216 residues: Pyrrolidone-carboxylate peptidase (216 aa).

Active-site residues include Glu-80, Cys-143, and His-168.

It belongs to the peptidase C15 family. In terms of assembly, homotetramer.

The protein localises to the cytoplasm. The enzyme catalyses Release of an N-terminal pyroglutamyl group from a polypeptide, the second amino acid generally not being Pro.. Its function is as follows. Removes 5-oxoproline from various penultimate amino acid residues except L-proline. The protein is Pyrrolidone-carboxylate peptidase of Cupriavidus taiwanensis (strain DSM 17343 / BCRC 17206 / CCUG 44338 / CIP 107171 / LMG 19424 / R1) (Ralstonia taiwanensis (strain LMG 19424)).